Consider the following 363-residue polypeptide: Type-2 angiotensin II receptor (363 aa).

Residues 1-45 lie on the Extracellular side of the membrane; it reads MKDNFSFAATSRNITSSLPFVNLNMSGTNDLIFNCSHKPSDKHLE. Asn-4, Asn-13, Asn-24, and Asn-34 each carry an N-linked (GlcNAc...) asparagine glycan. 2 disulfide bridges follow: Cys-35-Cys-290 and Cys-117-Cys-195. The helical transmembrane segment at 46-70 threads the bilayer; sequence AIPVLYYLIFVIGFAVNIIVVSLFC. Over 71 to 80 the chain is Cytoplasmic; that stretch reads CQKGPKKVSS. The helical transmembrane segment at 81 to 104 threads the bilayer; the sequence is IYIFNLAVADLLLLATLPLWATYY. Positions 103 and 104 each coordinate angiotensin II. Residues 105–114 lie on the Extracellular side of the membrane; sequence SYRYDWLFGP. Residues 115 to 140 form a helical membrane-spanning segment; the sequence is VMCKVFGSFLTLNMFASIFFITCMSV. Residues 141–159 lie on the Cytoplasmic side of the membrane; sequence DRYQSVIYPFLSQRRNPWQ. A helical membrane pass occupies residues 160 to 181; it reads ASYVVPLVWCMACLSSLPTFYF. Residues Arg-182, Tyr-204, and Lys-215 each contribute to the angiotensin II site. Over 182-206 the chain is Extracellular; that stretch reads RDVRTIEYLGVNACVMAFPPEKYAQ. Residues 207 to 232 traverse the membrane as a helical segment; that stretch reads WSAGIALMKNVLGFIIPLIFIATCYF. Topologically, residues 233-257 are cytoplasmic; that stretch reads GIRKHLLKTNSYGKNRITRDQVLKM. Residues 258-281 traverse the membrane as a helical segment; the sequence is AAAVVLAFIICWLPFHVLTFLDAL. Residue Asp-279 coordinates angiotensin II. At 282-294 the chain is on the extracellular side; the sequence is SWMGIINSCEVMA. The chain crosses the membrane as a helical span at residues 295–320; it reads VIDLALPFAILLGFTNSCVNPFLYCF. Angiotensin II is bound at residue Asp-297. The Cytoplasmic portion of the chain corresponds to 321–363; sequence VGNRFQQKLRSMFRVPITWLQGKRETMSCRKSSSLREMDTFVS. Residues 324–333 form a helix VIII region; the sequence is RFQQKLRSMF. Residue Ser-354 is modified to Phosphoserine; by PKC.

It belongs to the G-protein coupled receptor 1 family. In terms of assembly, interacts with MTUS1.

It localises to the cell membrane. Functionally, receptor for angiotensin II, a vasoconstricting peptide. Signals primarily via a non-canonical G-protein- and beta-arrestin independent pathways. Cooperates with MTUS1 to inhibit ERK2 activation and cell proliferation. The sequence is that of Type-2 angiotensin II receptor (AGTR2) from Meriones unguiculatus (Mongolian jird).